We begin with the raw amino-acid sequence, 82 residues long: MKTLLLTLLVVTIVCLDLGYTLECHNQQSSQTPTTKTCSGETNCYKKWWSDHRGTIIERGCGCPKVKPGVNLNCCTTDRCNN.

The N-terminal stretch at methionine 1 to threonine 21 is a signal peptide. 4 disulfides stabilise this stretch: cysteine 24-cysteine 44, cysteine 38-cysteine 61, cysteine 63-cysteine 74, and cysteine 75-cysteine 80.

Belongs to the three-finger toxin family. Short-chain subfamily. Type I alpha-neurotoxin sub-subfamily. In terms of tissue distribution, expressed by the venom gland.

Its subcellular location is the secreted. In terms of biological role, binds to muscle nicotinic acetylcholine receptor (nAChR) and inhibit acetylcholine from binding to the receptor, thereby impairing neuromuscular transmission. Produces peripheral paralysis by blocking neuromuscular transmission at the postsynaptic site. Has a lower toxicity than cobrotoxin. The sequence is that of Cobrotoxin-b from Naja atra (Chinese cobra).